A 220-amino-acid chain; its full sequence is CASP-like protein 1E1 (220 aa).

The Cytoplasmic portion of the chain corresponds to 1–57; sequence METPTPRVKPGFNGVGVGMGSSVNGSSRRAGYYMGPAGAVAVAGGGRAAAAAPVDGC. A helical membrane pass occupies residues 58–78; the sequence is SVALRVFVLAATLVSAVVMGV. Residues 79–108 lie on the Extracellular side of the membrane; it reads DRQTSTIRITVTDALPPLEVPLTANWSYSS. Asparagine 103 is a glycosylation site (N-linked (GlcNAc...) asparagine). Residues 109–129 traverse the membrane as a helical segment; sequence AFVYFVVANAMVCLFSAAALA. Topologically, residues 130–144 are cytoplasmic; the sequence is ACRSRAAMVPVMVGD. A helical membrane pass occupies residues 145–165; that stretch reads LLALALLYSAVGAAAEFGILG. The Extracellular portion of the chain corresponds to 166-187; that stretch reads ERGNSHVRWPKVCNVYGRFCER. The helical transmembrane segment at 188–208 threads the bilayer; the sequence is AMAAVIVSLIAAFANLVLLML. At 209–220 the chain is on the cytoplasmic side; it reads NILTIHKSSSYY.

This sequence belongs to the Casparian strip membrane proteins (CASP) family. Homodimer and heterodimers.

Its subcellular location is the cell membrane. This Zea mays (Maize) protein is CASP-like protein 1E1.